The following is a 631-amino-acid chain: Dolichyl-diphosphooligosaccharide--protein glycosyltransferase subunit 2 (631 aa).

An N-terminal signal peptide occupies residues 1–22; the sequence is MAPPGSSTVFLLALTIIASTWA. Topologically, residues 23 to 540 are lumenal; that stretch reads LTPTHYLTKH…REPEKRPPTV (518 aa). Asn-106 carries an N-linked (GlcNAc...) asparagine glycan. Residue Lys-154 forms a Glycyl lysine isopeptide (Lys-Gly) (interchain with G-Cter in ubiquitin) linkage. A helical transmembrane segment spans residues 541–561; sequence VSNTFTALILSPLLLLFALWI. At 562–571 the chain is on the cytoplasmic side; the sequence is RIGANVSNFT. The chain crosses the membrane as a helical span at residues 572–592; the sequence is FAPSTIIFHLGHAAMLGLMYV. The Lumenal segment spans residues 593 to 596; sequence YWTQ. The helical transmembrane segment at 597-617 threads the bilayer; that stretch reads LNMFQTLKYLAILGSVTFLAG. Over 618 to 631 the chain is Cytoplasmic; it reads NRMLAQQAVKRTAH.

It belongs to the SWP1 family. Component of the oligosaccharyltransferase (OST) complex. OST exists in two different complex forms which contain common core subunits RPN1, RPN2, OST48, OST4, DAD1 and TMEM258, either STT3A or STT3B as catalytic subunits, and form-specific accessory subunits. STT3A complex assembly occurs through the formation of 3 subcomplexes. Subcomplex 1 contains RPN1 and TMEM258, subcomplex 2 contains the STT3A-specific subunits STT3A, DC2/OSTC, and KCP2 as well as the core subunit OST4, and subcomplex 3 contains RPN2, DAD1, and OST48. The STT3A complex can form stable complexes with the Sec61 complex or with both the Sec61 and TRAP complexes. Interacts with DDI2. Interacts with TMEM35A/NACHO. Expressed in all tissues tested.

Its subcellular location is the endoplasmic reticulum. The protein localises to the endoplasmic reticulum membrane. It participates in protein modification; protein glycosylation. Its function is as follows. Subunit of the oligosaccharyl transferase (OST) complex that catalyzes the initial transfer of a defined glycan (Glc(3)Man(9)GlcNAc(2) in eukaryotes) from the lipid carrier dolichol-pyrophosphate to an asparagine residue within an Asn-X-Ser/Thr consensus motif in nascent polypeptide chains, the first step in protein N-glycosylation. N-glycosylation occurs cotranslationally and the complex associates with the Sec61 complex at the channel-forming translocon complex that mediates protein translocation across the endoplasmic reticulum (ER). All subunits are required for a maximal enzyme activity. This is Dolichyl-diphosphooligosaccharide--protein glycosyltransferase subunit 2 from Homo sapiens (Human).